The following is a 288-amino-acid chain: Bifunctional protein FolD (288 aa).

NADP(+)-binding positions include 166–168 and Ile-232; that span reads GAS.

This sequence belongs to the tetrahydrofolate dehydrogenase/cyclohydrolase family. In terms of assembly, homodimer.

The enzyme catalyses (6R)-5,10-methylene-5,6,7,8-tetrahydrofolate + NADP(+) = (6R)-5,10-methenyltetrahydrofolate + NADPH. It catalyses the reaction (6R)-5,10-methenyltetrahydrofolate + H2O = (6R)-10-formyltetrahydrofolate + H(+). Its pathway is one-carbon metabolism; tetrahydrofolate interconversion. Catalyzes the oxidation of 5,10-methylenetetrahydrofolate to 5,10-methenyltetrahydrofolate and then the hydrolysis of 5,10-methenyltetrahydrofolate to 10-formyltetrahydrofolate. The sequence is that of Bifunctional protein FolD from Cronobacter sakazakii (strain ATCC BAA-894) (Enterobacter sakazakii).